Consider the following 293-residue polypeptide: 3-methyl-2-oxobutanoate hydroxymethyltransferase (293 aa).

The tract at residues 1–29 (MTAAHDRSENQPGRPGGETTAPYGSAPRR) is disordered. Mg(2+) contacts are provided by Asp73 and Asp112. 3-methyl-2-oxobutanoate contacts are provided by residues 73–74 (DS), Asp112, and Lys142. Glu144 contacts Mg(2+). The active-site Proton acceptor is Glu210.

It belongs to the PanB family. In terms of assembly, homodecamer; pentamer of dimers. Mg(2+) serves as cofactor.

The protein localises to the cytoplasm. The enzyme catalyses 3-methyl-2-oxobutanoate + (6R)-5,10-methylene-5,6,7,8-tetrahydrofolate + H2O = 2-dehydropantoate + (6S)-5,6,7,8-tetrahydrofolate. Its pathway is cofactor biosynthesis; (R)-pantothenate biosynthesis; (R)-pantoate from 3-methyl-2-oxobutanoate: step 1/2. Its function is as follows. Catalyzes the reversible reaction in which hydroxymethyl group from 5,10-methylenetetrahydrofolate is transferred onto alpha-ketoisovalerate to form ketopantoate. The sequence is that of 3-methyl-2-oxobutanoate hydroxymethyltransferase from Saccharopolyspora erythraea (strain ATCC 11635 / DSM 40517 / JCM 4748 / NBRC 13426 / NCIMB 8594 / NRRL 2338).